We begin with the raw amino-acid sequence, 161 residues long: Cytidylate kinase (161 aa).

7-15 (GLAGTGTTT) provides a ligand contact to ATP.

It belongs to the cytidylate kinase family. Type 2 subfamily.

Its subcellular location is the cytoplasm. It carries out the reaction CMP + ATP = CDP + ADP. The enzyme catalyses dCMP + ATP = dCDP + ADP. The polypeptide is Cytidylate kinase (cmk) (Methanothermobacter thermautotrophicus (strain ATCC 29096 / DSM 1053 / JCM 10044 / NBRC 100330 / Delta H) (Methanobacterium thermoautotrophicum)).